Consider the following 176-residue polypeptide: Viral interleukin-10 homolog (176 aa).

Positions 1–25 (MLSVMVSSSLVLIVFFLGASEEAKP) are cleaved as a signal peptide. Disulfide bonds link C38/C128 and C82/C133. A glycan (N-linked (GlcNAc...) asparagine; by host) is linked at N152.

The protein belongs to the IL-10 family. In terms of assembly, homodimer; disulfide-linked.

Its subcellular location is the secreted. Functional viral IL-10 homolog. Can bind to the human IL-10 receptor and compete with human IL-10 for binding sites. Requires both subunits of the human IL-10 receptor complex to induce signal transduction events and biological activities. IL-10 signaling pathway has several immunosuppressive activities that are exploited by the virus. Inhibits TLR-induced type I interferon production in host plasmacytoid dendritic cells. The polypeptide is Viral interleukin-10 homolog (UL111A) (Homo sapiens (Human)).